The chain runs to 229 residues: UPF0758 protein Mbur_0382 (229 aa).

One can recognise an MPN domain in the interval 106–228 (KIRSANDVYS…YVSLKEEGYI (123 aa)). The Zn(2+) site is built by His-177, His-179, and Asp-190. The JAMM motif signature appears at 177 to 190 (HNHPSGDPAPSRED).

This sequence belongs to the UPF0758 family.

The protein is UPF0758 protein Mbur_0382 of Methanococcoides burtonii (strain DSM 6242 / NBRC 107633 / OCM 468 / ACE-M).